Reading from the N-terminus, the 216-residue chain is Octanoyltransferase (216 aa).

A BPL/LPL catalytic domain is found at 34–209 (ENTIDEIWLV…KMNQQLDYSH (176 aa)). Residues 73 to 80 (RGGQITFH), 140 to 142 (SLG), and 153 to 155 (GLA) each bind substrate. The Acyl-thioester intermediate role is filled by Cys-171.

Belongs to the LipB family.

It localises to the cytoplasm. It carries out the reaction octanoyl-[ACP] + L-lysyl-[protein] = N(6)-octanoyl-L-lysyl-[protein] + holo-[ACP] + H(+). It participates in protein modification; protein lipoylation via endogenous pathway; protein N(6)-(lipoyl)lysine from octanoyl-[acyl-carrier-protein]: step 1/2. Its function is as follows. Catalyzes the transfer of endogenously produced octanoic acid from octanoyl-acyl-carrier-protein onto the lipoyl domains of lipoate-dependent enzymes. Lipoyl-ACP can also act as a substrate although octanoyl-ACP is likely to be the physiological substrate. In Psychromonas ingrahamii (strain DSM 17664 / CCUG 51855 / 37), this protein is Octanoyltransferase.